Here is a 473-residue protein sequence, read N- to C-terminus: Glutamine synthetase (473 aa).

The GS beta-grasp domain maps to 15-100 (ENIKIIDLKF…ICSIKEPRTG (86 aa)). Residues 107-473 (PRTIAAKAVE…PYEFSLYYDC (367 aa)) enclose the GS catalytic domain. Residue E132 coordinates Mn(2+). E134 serves as a coordination point for Mg(2+). E210 is a binding site for ATP. Mg(2+) is bound by residues E215 and E223. L-glutamate is bound by residues 267–268 (NG) and G268. H272 contacts Mg(2+). Residues 274–276 (HQS) and S276 contribute to the ATP site. L-glutamate is bound by residues R324, E330, and R342. 3 residues coordinate ATP: R342, R347, and K356. Mn(2+) is bound at residue E361. R363 contributes to the L-glutamate binding site. O-AMP-tyrosine is present on Y401.

It belongs to the glutamine synthetase family. Oligomer of 12 subunits arranged in the form of two hexagons. It depends on Mg(2+) as a cofactor.

The protein resides in the cytoplasm. It carries out the reaction L-glutamate + NH4(+) + ATP = L-glutamine + ADP + phosphate + H(+). With respect to regulation, inhibited by ADP (90%), AMP (80%), alanine (52%) and aspartate (41%). The activity of this enzyme could be controlled by adenylation under conditions of abundant glutamine. In terms of biological role, involved in nitrogen metabolism via ammonium assimilation. Catalyzes the ATP-dependent biosynthesis of glutamine from glutamate and ammonia. This chain is Glutamine synthetase, found in Synechocystis sp. (strain ATCC 27184 / PCC 6803 / Kazusa).